The following is a 380-amino-acid chain: Alcohol dehydrogenase-like 4 (380 aa).

Zn(2+) contacts are provided by Cys-47, Thr-49, His-70, Cys-100, Cys-103, Cys-106, Cys-114, and Cys-180. An alcohol-binding residues include Thr-49 and His-70. Thr-49 lines the NAD(+) pocket. NAD(+) is bound by residues 205–210 (GLGAVG), Asp-229, Lys-234, 298–300 (LGV), Phe-325, and Arg-375.

The protein belongs to the zinc-containing alcohol dehydrogenase family. Class-III subfamily. Homodimer. The cofactor is Zn(2+).

It is found in the cytoplasm. It carries out the reaction a primary alcohol + NAD(+) = an aldehyde + NADH + H(+). The catalysed reaction is a secondary alcohol + NAD(+) = a ketone + NADH + H(+). This chain is Alcohol dehydrogenase-like 4, found in Arabidopsis thaliana (Mouse-ear cress).